The chain runs to 374 residues: Large ribosomal subunit protein bL27m (374 aa).

The transit peptide at 1-41 (MLRLSGVKSAVRARAAAGAAFSVSLSGPQAVSLLALPLVRH) directs the protein to the mitochondrion.

This sequence belongs to the bacterial ribosomal protein bL27 family.

The protein localises to the mitochondrion. Functionally, component of the large subunit of mitochondrial ribosome. The chain is Large ribosomal subunit protein bL27m (MRPL2) from Yarrowia lipolytica (strain CLIB 122 / E 150) (Yeast).